Here is a 336-residue protein sequence, read N- to C-terminus: Aldehyde reductase AdhA (336 aa).

Residues Cys-36, Cys-39, His-61, Cys-92, Cys-95, Cys-98, Cys-106, and Cys-148 each coordinate Zn(2+).

This sequence belongs to the zinc-containing alcohol dehydrogenase family. In terms of assembly, homotetramer. Requires Zn(2+) as cofactor.

Its subcellular location is the cytoplasm. The catalysed reaction is a primary alcohol + NADP(+) = an aldehyde + NADPH + H(+). Active on a wide variety of primary alcohols and their corresponding aldehydes, but not against ketones nor secondary alcohols. Active on aliphatic compounds up to 5 carbons in length and aromatic alcohols, less effective on branched-chain primary alcohols. Prefers NADPH to NADH. Its catalytic efficiency is greatest for aldehydes, suggesting the reduction of aromatic and medium-chain aliphatic aldehydes is its in vivo activity. Plays a role in tolerance to internally produced ethanol. In Synechocystis sp. (strain ATCC 27184 / PCC 6803 / Kazusa), this protein is Aldehyde reductase AdhA.